Here is a 941-residue protein sequence, read N- to C-terminus: Translation initiation factor IF-2 (941 aa).

2 disordered regions span residues 61-204 and 249-274; these read IQSN…RREN and QEKD…KNNK. Residues 147–163 are compositionally biased toward basic and acidic residues; the sequence is EKAKQKLQEIQKSREAL. Over residues 164–179 the composition is skewed to low complexity; sequence NKLTQSNTNNANNANS. Positions 180 to 204 are enriched in basic and acidic residues; sequence AKKEISEVAKQEREQEHLDNKRREN. The tr-type G domain maps to 440 to 609; that stretch reads ERPPVVTIMG…LIQADIMELK (170 aa). The interval 449–456 is G1; the sequence is GHVDHGKT. 449–456 lines the GTP pocket; sequence GHVDHGKT. The tract at residues 474-478 is G2; it reads GITQH. Residues 495–498 form a G3 region; it reads DTPG. Residues 495 to 499 and 549 to 552 each bind GTP; these read DTPGH and NKMD. Residues 549 to 552 are G4; sequence NKMD. The tract at residues 585 to 587 is G5; sequence SAK.

This sequence belongs to the TRAFAC class translation factor GTPase superfamily. Classic translation factor GTPase family. IF-2 subfamily.

It is found in the cytoplasm. Functionally, one of the essential components for the initiation of protein synthesis. Protects formylmethionyl-tRNA from spontaneous hydrolysis and promotes its binding to the 30S ribosomal subunits. Also involved in the hydrolysis of GTP during the formation of the 70S ribosomal complex. The protein is Translation initiation factor IF-2 of Helicobacter acinonychis (strain Sheeba).